Reading from the N-terminus, the 338-residue chain is MRTWLTRGWLARLLWPLAQLHGQAVRLRRALYRSGILESCRFGVPVIVAGNVVAGGAGKTPLVMALVRHLQAQGLQVGVVSRGYGRSSHESLEVSIGTPVAQSGDEPALIKRATNAPVFVAKKRADAVRRLLATYPSTAVVVCDDGLQHYALQRDIEIAVFDDRGVGNGWLLPAGPLREPWPGRRQQGLDLVLHTGLKPAFEGFTSGRQLADHAIAADGSQIALTALRGRTLVALAGIANPEAFFAMLRARGLVLEQTLSLPDHHDFGAGDLAACAGKTVLCTEKDAVKLFGKPGLASLQLLAVPLVFSPEPAFFAALDALLAPLLSQLPSGHGYQTA.

An ATP-binding site is contributed by 53–60 (VAGGAGKT).

Belongs to the LpxK family.

The enzyme catalyses a lipid A disaccharide + ATP = a lipid IVA + ADP + H(+). It functions in the pathway glycolipid biosynthesis; lipid IV(A) biosynthesis; lipid IV(A) from (3R)-3-hydroxytetradecanoyl-[acyl-carrier-protein] and UDP-N-acetyl-alpha-D-glucosamine: step 6/6. Its function is as follows. Transfers the gamma-phosphate of ATP to the 4'-position of a tetraacyldisaccharide 1-phosphate intermediate (termed DS-1-P) to form tetraacyldisaccharide 1,4'-bis-phosphate (lipid IVA). This is Tetraacyldisaccharide 4'-kinase from Polaromonas sp. (strain JS666 / ATCC BAA-500).